A 324-amino-acid chain; its full sequence is Cysteine-rich repeat secretory protein 9 (324 aa).

Positions 1–27 are cleaved as a signal peptide; sequence MARIIITLTIPLFYFFFFSLLSHQTMS. Gnk2-homologous domains follow at residues 29 to 132 and 138 to 248; these read PDHI…NVSF and IVPS…TSVL. A disordered region spans residues 251–286; sequence PPPSPSAPPPRSPPPKSSPPSSLPQTPSPPLVFTPP.

It belongs to the cysteine-rich repeat secretory protein family.

It is found in the secreted. The polypeptide is Cysteine-rich repeat secretory protein 9 (CRRSP9) (Arabidopsis thaliana (Mouse-ear cress)).